The chain runs to 343 residues: Single-pass membrane and coiled-coil domain-containing protein 2 (343 aa).

Positions 86-99 are enriched in basic and acidic residues; sequence EHDQDLSKQDKQET. The interval 86–108 is disordered; it reads EHDQDLSKQDKQETDVDEDPQAS. Residues 152–238 are a coiled coil; it reads TEKIDNIIKK…SAKLRMYQME (87 aa). The helical transmembrane segment at 284 to 304 threads the bilayer; it reads IFIMFDVLTVTGLLCYILFFG.

The protein resides in the membrane. In Homo sapiens (Human), this protein is Single-pass membrane and coiled-coil domain-containing protein 2 (SMCO2).